The primary structure comprises 87 residues: Small ribosomal subunit protein bS16c (87 aa).

Belongs to the bacterial ribosomal protein bS16 family.

Its subcellular location is the plastid. The protein resides in the chloroplast. The protein is Small ribosomal subunit protein bS16c of Zygnema circumcarinatum (Green alga).